Reading from the N-terminus, the 388-residue chain is Protein phosphatase 2C 57 (388 aa).

The PPM-type phosphatase domain occupies arginine 59–leucine 348. Mn(2+) contacts are provided by aspartate 93, glycine 94, aspartate 296, and aspartate 339. The helical transmembrane segment at valine 363–methionine 383 threads the bilayer.

The protein belongs to the PP2C family. Mg(2+) is required as a cofactor. It depends on Mn(2+) as a cofactor.

The protein localises to the membrane. The protein resides in the plastid. It localises to the chloroplast stroma. The enzyme catalyses O-phospho-L-seryl-[protein] + H2O = L-seryl-[protein] + phosphate. It catalyses the reaction O-phospho-L-threonyl-[protein] + H2O = L-threonyl-[protein] + phosphate. In terms of biological role, protein phosphatase specifically required for efficient dephosphorylation of the light-harvesting complex II outer antennae (LCHII) and transition from state 2 to state 1. State transition plays a central role in response to environmental changes and allows to adjust to changing light conditions via the redistribution of light excitation energy between photosystem II (PSII) and photosystem I (PSI) in a short time by relocating LHCII proteins. Mainly responsible for the dephosphorylation of Lhcb1 and Lhcb2 but not of the photosystem II core proteins. In Arabidopsis thaliana (Mouse-ear cress), this protein is Protein phosphatase 2C 57.